The sequence spans 468 residues: UDP-N-acetylmuramoyl-L-alanine--L-glutamate ligase (468 aa).

122 to 128 contributes to the ATP binding site; that stretch reads GTKGKST.

Belongs to the MurCDEF family. MurD2 subfamily.

The protein localises to the cytoplasm. The catalysed reaction is UDP-N-acetyl-alpha-D-muramoyl-L-alanine + L-glutamate + ATP = UDP-N-acetyl-alpha-D-muramoyl-L-alanyl-L-glutamate + ADP + phosphate + H(+). It participates in cell wall biogenesis; peptidoglycan biosynthesis. Cell wall formation. Catalyzes the addition of L-glutamate to the nucleotide precursor UDP-N-acetylmuramoyl-L-alanine. This Xanthomonas campestris pv. campestris (strain 8004) protein is UDP-N-acetylmuramoyl-L-alanine--L-glutamate ligase.